The chain runs to 71 residues: Large ribosomal subunit protein bL31 (71 aa).

C16, C18, C37, and C40 together coordinate Zn(2+).

This sequence belongs to the bacterial ribosomal protein bL31 family. Type A subfamily. In terms of assembly, part of the 50S ribosomal subunit. It depends on Zn(2+) as a cofactor.

Binds the 23S rRNA. The chain is Large ribosomal subunit protein bL31 from Pseudoalteromonas translucida (strain TAC 125).